The chain runs to 244 residues: 5-oxoprolinase subunit A (244 aa).

It belongs to the LamB/PxpA family. As to quaternary structure, forms a complex composed of PxpA, PxpB and PxpC.

It catalyses the reaction 5-oxo-L-proline + ATP + 2 H2O = L-glutamate + ADP + phosphate + H(+). Functionally, catalyzes the cleavage of 5-oxoproline to form L-glutamate coupled to the hydrolysis of ATP to ADP and inorganic phosphate. This is 5-oxoprolinase subunit A from Shigella sonnei (strain Ss046).